A 200-amino-acid polypeptide reads, in one-letter code: Thymidine kinase (200 aa).

ATP contacts are provided by residues 15–22 (GSMFSGKS) and 88–91 (DEVQ). Residue Glu-89 is the Proton acceptor of the active site. Zn(2+) is bound by residues Cys-145, Cys-148, Cys-183, and His-186.

Belongs to the thymidine kinase family. In terms of assembly, homotetramer.

It localises to the cytoplasm. It catalyses the reaction thymidine + ATP = dTMP + ADP + H(+). The sequence is that of Thymidine kinase from Bacillus pumilus (strain SAFR-032).